The chain runs to 317 residues: 4-hydroxy-3-methylbut-2-enyl diphosphate reductase (317 aa).

C12 is a binding site for [4Fe-4S] cluster. The (2E)-4-hydroxy-3-methylbut-2-enyl diphosphate site is built by H41 and H74. The dimethylallyl diphosphate site is built by H41 and H74. Isopentenyl diphosphate is bound by residues H41 and H74. Position 97 (C97) interacts with [4Fe-4S] cluster. Residue H125 participates in (2E)-4-hydroxy-3-methylbut-2-enyl diphosphate binding. Position 125 (H125) interacts with dimethylallyl diphosphate. Residue H125 coordinates isopentenyl diphosphate. Residue E127 is the Proton donor of the active site. T168 contacts (2E)-4-hydroxy-3-methylbut-2-enyl diphosphate. A [4Fe-4S] cluster-binding site is contributed by C198. (2E)-4-hydroxy-3-methylbut-2-enyl diphosphate contacts are provided by S226, S227, N228, and S270. The dimethylallyl diphosphate site is built by S226, S227, N228, and S270. Positions 226, 227, 228, and 270 each coordinate isopentenyl diphosphate.

This sequence belongs to the IspH family. In terms of assembly, homodimer. Requires [4Fe-4S] cluster as cofactor.

It carries out the reaction isopentenyl diphosphate + 2 oxidized [2Fe-2S]-[ferredoxin] + H2O = (2E)-4-hydroxy-3-methylbut-2-enyl diphosphate + 2 reduced [2Fe-2S]-[ferredoxin] + 2 H(+). The catalysed reaction is dimethylallyl diphosphate + 2 oxidized [2Fe-2S]-[ferredoxin] + H2O = (2E)-4-hydroxy-3-methylbut-2-enyl diphosphate + 2 reduced [2Fe-2S]-[ferredoxin] + 2 H(+). It participates in isoprenoid biosynthesis; dimethylallyl diphosphate biosynthesis; dimethylallyl diphosphate from (2E)-4-hydroxy-3-methylbutenyl diphosphate: step 1/1. The protein operates within isoprenoid biosynthesis; isopentenyl diphosphate biosynthesis via DXP pathway; isopentenyl diphosphate from 1-deoxy-D-xylulose 5-phosphate: step 6/6. Functionally, catalyzes the conversion of 1-hydroxy-2-methyl-2-(E)-butenyl 4-diphosphate (HMBPP) into a mixture of isopentenyl diphosphate (IPP) and dimethylallyl diphosphate (DMAPP). Acts in the terminal step of the DOXP/MEP pathway for isoprenoid precursor biosynthesis. This is 4-hydroxy-3-methylbut-2-enyl diphosphate reductase from Yersinia pseudotuberculosis serotype O:1b (strain IP 31758).